The primary structure comprises 559 residues: Glucose-6-phosphate isomerase 2 (559 aa).

Glutamate 367 serves as the catalytic Proton donor. Residues histidine 398 and lysine 522 contribute to the active site.

It belongs to the GPI family.

It localises to the cytoplasm. The enzyme catalyses alpha-D-glucose 6-phosphate = beta-D-fructose 6-phosphate. The protein operates within carbohydrate biosynthesis; gluconeogenesis. Its pathway is carbohydrate degradation; glycolysis; D-glyceraldehyde 3-phosphate and glycerone phosphate from D-glucose: step 2/4. Catalyzes the reversible isomerization of glucose-6-phosphate to fructose-6-phosphate. In Chromohalobacter salexigens (strain ATCC BAA-138 / DSM 3043 / CIP 106854 / NCIMB 13768 / 1H11), this protein is Glucose-6-phosphate isomerase 2.